Here is a 449-residue protein sequence, read N- to C-terminus: MTSSVWQERRHGEDKQRRNDHRSPYQRDRARILHSAAFRRLQAKTQVLGVGMNDFYRTRLTHSLEVSQIGTGIAAQLRRKYPQHKQLLCSMSLLESLCLAHDIGHPPFGHGGEVALNYMMRDHGGFEGNGQTFRILSKLEPYTLDFGMNLCRRTMLGILKYPAPHSKLFVAGKHSEITNHRQLKPSQWPPVKGIFDDDNDIFAWVLEPLSEADRSRFTSTQQGSHPALHHYPHLRTQFKSFDCSIMELADDIAYAVHDLEDAIVMGIVTASQWHQDVAPTLTNSGDAWIRQELADIGNKLFSHEHHLRKDAIGTLVNGFVTAIVISEDDVFEEPLLRFNATLEPEFAIALNVLKQLVYKYVIRKPEIQMLEYKGQQIVMGLFEAFASDPERLLPLNTQERWRESEQQGLNSHRVLADYISGMTDEFAGRLYQQLFSPKAGSNVELSKEM.

Residues 1-27 are disordered; it reads MTSSVWQERRHGEDKQRRNDHRSPYQR. The segment covering 7 to 27 has biased composition (basic and acidic residues); it reads QERRHGEDKQRRNDHRSPYQR. The HD domain maps to 59–255; the sequence is RLTHSLEVSQ…MELADDIAYA (197 aa).

Belongs to the dGTPase family. Type 2 subfamily.

The protein is Deoxyguanosinetriphosphate triphosphohydrolase-like protein of Shewanella baltica (strain OS185).